The chain runs to 902 residues: Ephrin type-B receptor 1-B (902 aa).

In terms of domain architecture, Eph LBD spans His-1–Gln-119. Residues His-1 to Leu-459 are Extracellular-facing. 2 Fibronectin type-III domains span residues Val-240–Ala-350 and Ala-351–Asp-448. 3 N-linked (GlcNAc...) asparagine glycosylation sites follow: Asn-252, Asn-344, and Asn-398. Residues Ile-460–Val-480 form a helical membrane-spanning segment. Residues Cys-481–Ala-902 lie on the Cytoplasmic side of the membrane. One can recognise a Protein kinase domain in the interval Val-537–Ile-800. ATP contacts are provided by residues Ile-543 to Val-551 and Lys-569. The active-site Proton acceptor is Asp-662. In terms of domain architecture, SAM spans Ser-829–Gln-893. Residues Ser-900–Ala-902 carry the PDZ-binding motif.

It belongs to the protein kinase superfamily. Tyr protein kinase family. Ephrin receptor subfamily. As to quaternary structure, heterotetramer upon binding of the ligand. The heterotetramer is composed of an ephrin dimer and a receptor dimer. Oligomerization is probably required to induce biological responses. Phosphorylated. Autophosphorylation is stimulated by ligands. In terms of tissue distribution, expressed in the embryo in the brain and spinal cord and in the first and fourth visceral arches. Most abundant in adult brain, with lower levels in eye, heart, ovary, oviduct, lung and pharynx.

The protein resides in the cell membrane. Its subcellular location is the early endosome membrane. The protein localises to the cell projection. It is found in the dendrite. The catalysed reaction is L-tyrosyl-[protein] + ATP = O-phospho-L-tyrosyl-[protein] + ADP + H(+). Its function is as follows. Receptor tyrosine kinase which binds promiscuously transmembrane ephrin-B family ligands residing on adjacent cells, leading to contact-dependent bidirectional signaling into neighboring cells. The signaling pathway downstream of the receptor is referred to as forward signaling while the signaling pathway downstream of the ephrin ligand is referred to as reverse signaling. May play a role in axon guidance during nervous system development. May also play an important redundant role with other ephrin-B receptors in development and maturation of dendritic spines and synapse formation. More generally, may play a role in targeted cell migration and adhesion. Upon activation by ephrin-B ligands activates the MAPK/ERK and the JNK signaling cascades to regulate cell migration and adhesion respectively. The chain is Ephrin type-B receptor 1-B (ephb1-b) from Xenopus laevis (African clawed frog).